We begin with the raw amino-acid sequence, 467 residues long: Septin-10 (467 aa).

The Septin-type G domain occupies 63-329; that stretch reads QGFCFNILCV…ELYRRCKLEE (267 aa). The G1 motif stretch occupies residues 73 to 80; sequence GETGIGKS. Residues 73–80, G128, 209–217, G263, and R278 contribute to the GTP site; these read GETGIGKS and KADTVSKTE. The segment at 125–128 is G3 motif; the sequence is NTVG. Positions 208–211 are G4 motif; the sequence is AKAD.

This sequence belongs to the TRAFAC class TrmE-Era-EngA-EngB-Septin-like GTPase superfamily. Septin GTPase family. As to quaternary structure, septins polymerize into heterooligomeric protein complexes that form filaments, and can associate with cellular membranes, actin filaments and microtubules. GTPase activity is required for filament formation. Interacts with ADGB. In terms of processing, proteolytically cleaved in vitro in a calmodulin-dependent manner.

It localises to the cytoplasm. The protein resides in the cytoskeleton. The protein localises to the cell projection. Its subcellular location is the cilium. It is found in the flagellum. Filament-forming cytoskeletal GTPase. May play a role in cytokinesis (Potential). This Pongo abelii (Sumatran orangutan) protein is Septin-10.